A 384-amino-acid chain; its full sequence is Formate-dependent phosphoribosylglycinamide formyltransferase (384 aa).

N(1)-(5-phospho-beta-D-ribosyl)glycinamide is bound by residues 14–15 (EL) and E74. ATP contacts are provided by residues R106, K147, 152-157 (SSGKGQ), 187-190 (EEFI), and E195. One can recognise an ATP-grasp domain in the interval 111–300 (RLAAETLGLA…EFALHVRAIL (190 aa)). Mg(2+)-binding residues include E259 and E271. N(1)-(5-phospho-beta-D-ribosyl)glycinamide-binding positions include D278, K348, and 355 to 356 (RR).

The protein belongs to the PurK/PurT family. As to quaternary structure, homodimer.

The catalysed reaction is N(1)-(5-phospho-beta-D-ribosyl)glycinamide + formate + ATP = N(2)-formyl-N(1)-(5-phospho-beta-D-ribosyl)glycinamide + ADP + phosphate + H(+). It participates in purine metabolism; IMP biosynthesis via de novo pathway; N(2)-formyl-N(1)-(5-phospho-D-ribosyl)glycinamide from N(1)-(5-phospho-D-ribosyl)glycinamide (formate route): step 1/1. Catalyzes two reactions: the first one is the production of beta-formyl glycinamide ribonucleotide (GAR) from formate, ATP and beta GAR; the second, a side reaction, is the production of acetyl phosphate and ADP from acetate and ATP. In terms of biological role, involved in the de novo purine biosynthesis. Catalyzes the transfer of formate to 5-phospho-ribosyl-glycinamide (GAR), producing 5-phospho-ribosyl-N-formylglycinamide (FGAR). Formate is provided by PurU via hydrolysis of 10-formyl-tetrahydrofolate. The chain is Formate-dependent phosphoribosylglycinamide formyltransferase from Bacillus subtilis (strain 168).